The chain runs to 515 residues: Acetyltransferase sphE (515 aa).

Residues histidine 184 and aspartate 438 each act as proton acceptor in the active site.

Belongs to the plant acyltransferase family. In terms of assembly, monomer.

The enzyme catalyses sphingofungin B + acetyl-CoA = sphingofungin C + CoA. The protein operates within secondary metabolite biosynthesis. Functionally, acetyltransferase; part of the gene cluster that mediates the biosynthesis of sphingofungins, bioactive molecules acting as sphingolipid inhibitors via inhibiting serine palmitoyl transferase (SPT). Within the pathway, sphE catalyzes the O-acetylation of the C-5 hydroxyl group of sphingofungin B to produce sphingofungin C. SphE can also convert sphingofungin B1 into sphingofungin C1 and sphingofungin B2 into sphingofungin C2. Sphingofungin biosynthesis starts with the PKS sphB that produces an C18 polyketide precursor 3-hydroxyoctadeca-4,10-dienoyl-ACP containing one delta-6 desaturation and one delta-12 desaturation. The aminoacyl transferase sphA uses the sphB product to produce 3-keto-presphingofungin by adding an aminomalonate molecule. SphF then reduces the C-3 ketone of 3-keto-presphingofungin which leads to presphingofungin. The cytochrome P450 monooxygenase sphH converts presphingofungin into sphingofungin B1 which is further converted to sphingofungin B by the dioxygenase sphC. SphC is also able to convert presphingofungin into sphingofungin B2. The acetyltransferase sphE acetylates sphingofungin B to produce sphingofungin C, but can also convert sphingofungin B1 into sphingofungin C1 and sphingofungin B2 into sphingofungin C2. Finally, sphingofungin C can be spontaneously converted into sphingofungin D. The polypeptide is Acetyltransferase sphE (Aspergillus fumigatus (strain CBS 144.89 / FGSC A1163 / CEA10) (Neosartorya fumigata)).